A 235-amino-acid polypeptide reads, in one-letter code: Small ribosomal subunit protein uS3 (235 aa).

The KH type-2 domain maps to Val-39–Lys-107.

The protein belongs to the universal ribosomal protein uS3 family. Part of the 30S ribosomal subunit. Forms a tight complex with proteins S10 and S14.

Its function is as follows. Binds the lower part of the 30S subunit head. Binds mRNA in the 70S ribosome, positioning it for translation. This is Small ribosomal subunit protein uS3 from Actinobacillus succinogenes (strain ATCC 55618 / DSM 22257 / CCUG 43843 / 130Z).